A 426-amino-acid chain; its full sequence is Tol-Pal system protein TolB (426 aa).

A signal peptide spans 1–24 (MKLKSRYTSLISVVSIFFSSMVMA).

Belongs to the TolB family. As to quaternary structure, the Tol-Pal system is composed of five core proteins: the inner membrane proteins TolA, TolQ and TolR, the periplasmic protein TolB and the outer membrane protein Pal. They form a network linking the inner and outer membranes and the peptidoglycan layer.

It localises to the periplasm. Its function is as follows. Part of the Tol-Pal system, which plays a role in outer membrane invagination during cell division and is important for maintaining outer membrane integrity. The protein is Tol-Pal system protein TolB of Haemophilus ducreyi (strain 35000HP / ATCC 700724).